The primary structure comprises 145 residues: Transcriptional regulator MraZ (145 aa).

SpoVT-AbrB domains lie at 5–47 (EHQH…PLPE) and 76–119 (AVEC…AKDQ).

Belongs to the MraZ family. As to quaternary structure, forms oligomers.

The protein localises to the cytoplasm. The protein resides in the nucleoid. This is Transcriptional regulator MraZ from Pelotomaculum thermopropionicum (strain DSM 13744 / JCM 10971 / SI).